A 416-amino-acid polypeptide reads, in one-letter code: Tyrosine--tRNA ligase (416 aa).

L-tyrosine is bound at residue Tyr-39. The short motif at 44-53 (CTAPSLHAGH) is the 'HIGH' region element. Residues Tyr-176 and Gln-180 each contribute to the L-tyrosine site. The 'KMSKS' region signature appears at 236 to 240 (KMGKT). Lys-239 contacts ATP. One can recognise an S4 RNA-binding domain in the interval 349-414 (ISLVDLLHDT…AGKKRHIKVV (66 aa)).

Belongs to the class-I aminoacyl-tRNA synthetase family. TyrS type 1 subfamily. Homodimer.

The protein localises to the cytoplasm. It catalyses the reaction tRNA(Tyr) + L-tyrosine + ATP = L-tyrosyl-tRNA(Tyr) + AMP + diphosphate + H(+). Catalyzes the attachment of tyrosine to tRNA(Tyr) in a two-step reaction: tyrosine is first activated by ATP to form Tyr-AMP and then transferred to the acceptor end of tRNA(Tyr). This chain is Tyrosine--tRNA ligase, found in Wolbachia pipientis wMel.